A 260-amino-acid polypeptide reads, in one-letter code: Dolichol-phosphate mannosyltransferase subunit 1 (260 aa).

The interval 1 to 20 (MAAEEASRSSPRFRREPKGR) is disordered. Alanine 2 carries the post-translational modification N-acetylalanine. Serine 9 is modified (phosphoserine). 11 residues coordinate GDP-alpha-D-mannose: proline 32, tyrosine 34, glutamate 36, isoleucine 63, aspartate 65, aspartate 118, alanine 119, aspartate 120, arginine 147, arginine 234, and lysine 240. Aspartate 120 is a binding site for Mg(2+). Aspartate 120 provides a ligand contact to Mn(2+).

It belongs to the glycosyltransferase 2 family. Component of the dolichol-phosphate mannose (DPM) synthase complex composed of DPM1, DPM2 and DPM3; within the complex, directly interacts with DPM3. This interaction may stabilize DPM1. Requires Mg(2+) as cofactor. It depends on Mn(2+) as a cofactor. Ca(2+) serves as cofactor.

It localises to the endoplasmic reticulum. It catalyses the reaction a di-trans,poly-cis-dolichyl phosphate + GDP-alpha-D-mannose = a di-trans,poly-cis-dolichyl beta-D-mannosyl phosphate + GDP. It participates in protein modification; protein glycosylation. Transfers mannose from GDP-mannose to dolichol monophosphate to form dolichol phosphate mannose (Dol-P-Man) which is the mannosyl donor in pathways leading to N-glycosylation, glycosyl phosphatidylinositol membrane anchoring, and O-mannosylation of proteins; catalytic subunit of the dolichol-phosphate mannose (DPM) synthase complex. The polypeptide is Dolichol-phosphate mannosyltransferase subunit 1 (DPM1) (Bos taurus (Bovine)).